A 1150-amino-acid polypeptide reads, in one-letter code: Cell division cycle and apoptosis regulator protein 1 (1150 aa).

Residues 1–249 (MAQFGGQKNP…TQPQPQSLLQ (249 aa)) form an interaction with AR region. 2 disordered regions span residues 124 to 146 (PTAQ…QPQK) and 285 to 354 (IVSQ…SPRR). A compositionally biased stretch (low complexity) spans 134–146 (TPRSSQQQTQPQK). The segment at 203–660 (QRIQTLPNQN…RALSSKGLKS (458 aa)) is interaction with GATA2. Composition is skewed to basic and acidic residues over residues 293–334 (RRLD…ERSP) and 341–352 (ERSPRRERERSP). Ser456 carries the phosphoserine modification. Residues 594–618 (KQQLVEKLQGERKEADGEQDEEEKD) adopt a coiled-coil conformation. The tract at residues 600-638 (KLQGERKEADGEQDEEEKDDGEAKEISTPTHWSKLDPKT) is disordered. Positions 610–621 (GEQDEEEKDDGE) are enriched in acidic residues. Thr627 is modified (phosphothreonine). In terms of domain architecture, SAP spans 636–670 (PKTMKVNDLRKELESRALSSKGLKSQLIARLTKQL). Residue Lys637 forms a Glycyl lysine isopeptide (Lys-Gly) (interchain with G-Cter in ubiquitin) linkage. The tract at residues 643–1150 (DLRKELESRA…QKSKENGASV (508 aa)) is interaction with GATA1. Phosphothreonine is present on Thr667. 4 stretches are compositionally biased toward basic and acidic residues: residues 673–687 (EEQK…KSEK), 694–713 (DRKS…EEIE), 796–817 (KEDK…KKEE), and 832–855 (SGDD…KDDS). 2 disordered regions span residues 673–713 (EEQK…EEIE) and 796–915 (KEDK…EKEK). Residues Ser685 and Ser697 each carry the phosphoserine modification. The span at 856–889 (KDDDETEEDNNQDEYDPMEAEEAEDEEDDRDEEE) shows a compositional bias: acidic residues. Phosphothreonine is present on Thr861. Basic and acidic residues predominate over residues 890–915 (MTKRDDKRDINRYCKERPSKDKEKEK). Residue Lys1012 forms a Glycyl lysine isopeptide (Lys-Gly) (interchain with G-Cter in SUMO1); alternate linkage. Lys1012 is covalently cross-linked (Glycyl lysine isopeptide (Lys-Gly) (interchain with G-Cter in SUMO2); alternate). Positions 1033 to 1114 (DVGSLLQKLE…LQFENQMNKT (82 aa)) form a coiled coil. Residues Lys1067 and Lys1135 each participate in a glycyl lysine isopeptide (Lys-Gly) (interchain with G-Cter in SUMO2) cross-link.

Directly interacts with ESR1, NR3C1 and p53/TP53. Interacts (via N-terminus) with CALCOCO1. Interacts with MED1. Interacts with GATA1. Interacts with AR and GATA2. Expressed in various epithelial cancer cell lines, including breast, colon, prostate, pancreatic and leukemia. Expression is regulated by growth factors.

The protein resides in the cytoplasm. Its subcellular location is the perinuclear region. Associates with components of the Mediator and p160 coactivator complexes that play a role as intermediaries transducing regulatory signals from upstream transcriptional activator proteins to basal transcription machinery at the core promoter. Recruited to endogenous nuclear receptor target genes in response to the appropriate hormone. Also functions as a p53 coactivator. May thus play an important role in transcriptional regulation. May be involved in apoptosis signaling in the presence of the reinoid CD437. Apoptosis induction involves sequestration of 14-3-3 protein(s) and mediated altered expression of multiple cell cycle regulatory genes including MYC, CCNB1 and CDKN1A. Plays a role in cell cycle progression and/or cell proliferation. In association with CALCOCO1 enhances GATA1- and MED1-mediated transcriptional activation from the gamma-globin promoter during erythroid differentiation of K562 erythroleukemia cells. Can act as a both a coactivator and corepressor of AR-mediated transcription. Contributes to chromatin looping and AR transcription complex assembly by stabilizing AR-GATA2 association on chromatin and facilitating MED1 and RNA polymerase II recruitment to AR-binding sites. May play an important role in the growth and tumorigenesis of prostate cancer cells. In Homo sapiens (Human), this protein is Cell division cycle and apoptosis regulator protein 1 (CCAR1).